An 859-amino-acid chain; its full sequence is Photoactivated adenylate cyclase subunit beta (859 aa).

A BLUF 1 domain is found at 56–149 (LRRLMYLSKS…GRMYGDWHMK (94 aa)). A Guanylate cyclase 1 domain is found at 205–333 (VVTFIYLVEF…DCINTTSRIA (129 aa)). The segment at 420-443 (RPPIFDDTPKGNPRPRTPGYGGRQ) is disordered. The BLUF 2 domain occupies 471–563 (LTTLTYISQA…RVYPSEWTLT (93 aa)). The region spanning 619–748 (VMLATDICSF…AVSARVMEVE (130 aa)) is the Guanylate cyclase 2 domain. The disordered stretch occupies residues 813–859 (AARSGEKPLTEPEEAKPDFRVSPGRVRHGDSGRRSNSAQGKRSIQVR). Residues 815–831 (RSGEKPLTEPEEAKPDF) are compositionally biased toward basic and acidic residues. Residues 846–859 (RSNSAQGKRSIQVR) show a composition bias toward polar residues.

This sequence belongs to the adenylyl cyclase class-4/guanylyl cyclase family. In terms of assembly, heterotetramer of two alpha and two beta subunits. It depends on FAD as a cofactor.

It is found in the cell projection. Its subcellular location is the cilium. The protein resides in the flagellum. It carries out the reaction ATP = 3',5'-cyclic AMP + diphosphate. With respect to regulation, activity increased by up to 80-fold under blue light. Functionally, acts as a blue light photoreceptor for the step-up photophobic response. Mediates photoavoidance. The protein is Photoactivated adenylate cyclase subunit beta of Euglena gracilis.